The primary structure comprises 404 residues: 2,3-bisphosphoglycerate-independent phosphoglycerate mutase (404 aa).

The interval 155–183 (LSDMIGDSDPHREGLPPEKIRPTDPSGDR) is disordered. The span at 162 to 183 (SDPHREGLPPEKIRPTDPSGDR) shows a compositional bias: basic and acidic residues.

It belongs to the BPG-independent phosphoglycerate mutase family. A-PGAM subfamily.

It carries out the reaction (2R)-2-phosphoglycerate = (2R)-3-phosphoglycerate. It functions in the pathway carbohydrate degradation; glycolysis; pyruvate from D-glyceraldehyde 3-phosphate: step 3/5. Catalyzes the interconversion of 2-phosphoglycerate and 3-phosphoglycerate. The protein is 2,3-bisphosphoglycerate-independent phosphoglycerate mutase of Thermoplasma acidophilum (strain ATCC 25905 / DSM 1728 / JCM 9062 / NBRC 15155 / AMRC-C165).